The chain runs to 207 residues: MPNYKLLYFDARALAEPIRIMFAMLNVPYEDYRVSVEEWSKLKPTTPFGQLPILQVDGEQFGQSMSITRYLARKFGLAGKTAEEEAYADSIVDQYRDFIFFFRQFTSSVFYGSDADHINKVRFEVVEPARDDFLAIINKFLAKSKSGFLVGDSLTWADIVIADNLTSLLKNGFLDFNKEKKLEEFYNKIHSIPEIKNYVATRKDSIV.

One can recognise a GST N-terminal domain in the interval P2 to G79. Glutathione is bound by residues Y8, W39, K43, G49–L51, and Q63–S64. One can recognise a GST C-terminal domain in the interval T81 to V207.

The protein belongs to the GST superfamily. Sigma family.

It catalyses the reaction RX + glutathione = an S-substituted glutathione + a halide anion + H(+). Functionally, conjugation of reduced glutathione to a wide number of exogenous and endogenous hydrophobic electrophiles. May play a role in the detoxification of reactive oxygen species produced during pathogenic bacterial infection. The polypeptide is Glutathione S-transferase 4 (Caenorhabditis elegans).